The primary structure comprises 487 residues: Transcriptional adapter ADA2b (487 aa).

A compositionally biased stretch (polar residues) spans Met-1–Asp-13. The interval Met-1 to Ala-25 is disordered. The ZZ-type zinc-finger motif lies at Gly-42–Phe-98. Cys-47, Cys-50, Cys-62, Cys-65, Cys-71, Cys-74, His-84, and His-88 together coordinate Zn(2+). Positions Leu-100–Pro-152 constitute an SANT domain. Lys-216 is subject to N6-acetyllysine; by GCN5. Residues Arg-368–Glu-383 show a composition bias toward basic and acidic residues. The disordered stretch occupies residues Arg-368–Gly-388. The SWIRM domain maps to Gln-401–Leu-487.

As to quaternary structure, interacts in vitro with the HAT domain of GCN5 and with the DNA-binding domain of the transcriptional activator DREB1B/CBF1. Interacts with BZIP11. In terms of processing, acetylated in vitro by GCN5, but acetylation is not essential for biological activity. Expressed in roots, leaves, stems, flowers and siliques, with the strongest activity in the meristematic zones.

Its subcellular location is the nucleus. Required for the function of some acidic activation domains, which activate transcription from a distant site. The exact mechanism of action is not yet known. ADA2 stimulates the acetyltransferase activity of GCN5 on free histones or nucleosomes, probably by opening up the promoter region. Mediates auxin and cytokinin signals in the control of cell proliferation and might be involved in repression of a freezing tolerance pathway at warm temperature. Involved in the positive regulation of salt-induced gene expression by maintaining locus-specific acetylation of histones H4 and H3. The protein is Transcriptional adapter ADA2b (ADA2B) of Arabidopsis thaliana (Mouse-ear cress).